The primary structure comprises 252 residues: Carboxy-S-adenosyl-L-methionine synthase (252 aa).

Residues Y45, 70–72 (GCS), 95–96 (DN), 127–128 (DI), N142, and R209 each bind S-adenosyl-L-methionine.

This sequence belongs to the class I-like SAM-binding methyltransferase superfamily. Cx-SAM synthase family. As to quaternary structure, homodimer.

It carries out the reaction prephenate + S-adenosyl-L-methionine = carboxy-S-adenosyl-L-methionine + 3-phenylpyruvate + H2O. In terms of biological role, catalyzes the conversion of S-adenosyl-L-methionine (SAM) to carboxy-S-adenosyl-L-methionine (Cx-SAM). The sequence is that of Carboxy-S-adenosyl-L-methionine synthase from Pseudomonas paraeruginosa (strain DSM 24068 / PA7) (Pseudomonas aeruginosa (strain PA7)).